Consider the following 212-residue polypeptide: Thiamine-phosphate synthase (212 aa).

4-amino-2-methyl-5-(diphosphooxymethyl)pyrimidine-binding positions include 39 to 43 (QLREK) and Asn71. Mg(2+) contacts are provided by Asp72 and Asp91. Ser110 lines the 4-amino-2-methyl-5-(diphosphooxymethyl)pyrimidine pocket. Residue 137–139 (TPT) coordinates 2-[(2R,5Z)-2-carboxy-4-methylthiazol-5(2H)-ylidene]ethyl phosphate. Lys140 is a 4-amino-2-methyl-5-(diphosphooxymethyl)pyrimidine binding site. Gly168 lines the 2-[(2R,5Z)-2-carboxy-4-methylthiazol-5(2H)-ylidene]ethyl phosphate pocket.

The protein belongs to the thiamine-phosphate synthase family. Mg(2+) is required as a cofactor.

The enzyme catalyses 2-[(2R,5Z)-2-carboxy-4-methylthiazol-5(2H)-ylidene]ethyl phosphate + 4-amino-2-methyl-5-(diphosphooxymethyl)pyrimidine + 2 H(+) = thiamine phosphate + CO2 + diphosphate. It catalyses the reaction 2-(2-carboxy-4-methylthiazol-5-yl)ethyl phosphate + 4-amino-2-methyl-5-(diphosphooxymethyl)pyrimidine + 2 H(+) = thiamine phosphate + CO2 + diphosphate. It carries out the reaction 4-methyl-5-(2-phosphooxyethyl)-thiazole + 4-amino-2-methyl-5-(diphosphooxymethyl)pyrimidine + H(+) = thiamine phosphate + diphosphate. Its pathway is cofactor biosynthesis; thiamine diphosphate biosynthesis; thiamine phosphate from 4-amino-2-methyl-5-diphosphomethylpyrimidine and 4-methyl-5-(2-phosphoethyl)-thiazole: step 1/1. In terms of biological role, condenses 4-methyl-5-(beta-hydroxyethyl)thiazole monophosphate (THZ-P) and 2-methyl-4-amino-5-hydroxymethyl pyrimidine pyrophosphate (HMP-PP) to form thiamine monophosphate (TMP). This is Thiamine-phosphate synthase from Acidothermus cellulolyticus (strain ATCC 43068 / DSM 8971 / 11B).